A 297-amino-acid polypeptide reads, in one-letter code: N-acetylmuramic acid 6-phosphate etherase (297 aa).

The SIS domain occupies alanine 55–lysine 218. Residue glutamate 83 is the Proton donor of the active site. Glutamate 114 is a catalytic residue.

It belongs to the GCKR-like family. MurNAc-6-P etherase subfamily. Homodimer.

It carries out the reaction N-acetyl-D-muramate 6-phosphate + H2O = N-acetyl-D-glucosamine 6-phosphate + (R)-lactate. It participates in amino-sugar metabolism; 1,6-anhydro-N-acetylmuramate degradation. Its pathway is amino-sugar metabolism; N-acetylmuramate degradation. The protein operates within cell wall biogenesis; peptidoglycan recycling. Functionally, specifically catalyzes the cleavage of the D-lactyl ether substituent of MurNAc 6-phosphate, producing GlcNAc 6-phosphate and D-lactate. Together with AnmK, is also required for the utilization of anhydro-N-acetylmuramic acid (anhMurNAc) either imported from the medium or derived from its own cell wall murein, and thus plays a role in cell wall recycling. The protein is N-acetylmuramic acid 6-phosphate etherase of Salmonella typhi.